A 243-amino-acid chain; its full sequence is ATP synthase subunit a, chloroplastic (243 aa).

Transmembrane regions (helical) follow at residues 32–52 (GQVL…SFVG), 96–116 (TVFL…WALI), 129–149 (DINT…YAGI), 195–215 (LVVG…IMLL), and 216–236 (GCFT…AYIG).

It belongs to the ATPase A chain family. As to quaternary structure, F-type ATPases have 2 components, CF(1) - the catalytic core - and CF(0) - the membrane proton channel. CF(1) has five subunits: alpha(3), beta(3), gamma(1), delta(1), epsilon(1). CF(0) has four main subunits: a, b, b' and c.

Its subcellular location is the plastid. It localises to the chloroplast thylakoid membrane. Its function is as follows. Key component of the proton channel; it plays a direct role in the translocation of protons across the membrane. This is ATP synthase subunit a, chloroplastic from Tetradesmus obliquus (Green alga).